A 230-amino-acid chain; its full sequence is NAD-dependent protein deacylase 1 (230 aa).

The region spanning 1–226 (MESGIPTYRE…SHLSAFLSRE (226 aa)) is the Deacetylase sirtuin-type domain. 2 residues coordinate substrate: Y41 and R44. 75 to 78 (QNID) lines the NAD(+) pocket. The active-site Proton acceptor is the H93. Zn(2+) contacts are provided by C101, C104, C128, and C131. NAD(+) is bound by residues 168–170 (GTS), 194–196 (NTV), and A212.

It belongs to the sirtuin family. Class III subfamily. Zn(2+) serves as cofactor.

The protein resides in the cytoplasm. The enzyme catalyses N(6)-acetyl-L-lysyl-[protein] + NAD(+) + H2O = 2''-O-acetyl-ADP-D-ribose + nicotinamide + L-lysyl-[protein]. It carries out the reaction N(6)-succinyl-L-lysyl-[protein] + NAD(+) + H2O = 2''-O-succinyl-ADP-D-ribose + nicotinamide + L-lysyl-[protein]. Functionally, NAD-dependent lysine deacetylase and desuccinylase that specifically removes acetyl and succinyl groups on target proteins. Modulates the activities of several proteins which are inactive in their acylated form. The protein is NAD-dependent protein deacylase 1 of Pseudomonas syringae pv. tomato (strain ATCC BAA-871 / DC3000).